Consider the following 518-residue polypeptide: Bifunctional purine biosynthesis protein PurH (518 aa).

Residues 1–146 enclose the MGS-like domain; it reads MSPIALLSVS…KNHQDVLVVT (146 aa).

It belongs to the PurH family.

It catalyses the reaction (6R)-10-formyltetrahydrofolate + 5-amino-1-(5-phospho-beta-D-ribosyl)imidazole-4-carboxamide = 5-formamido-1-(5-phospho-D-ribosyl)imidazole-4-carboxamide + (6S)-5,6,7,8-tetrahydrofolate. The enzyme catalyses IMP + H2O = 5-formamido-1-(5-phospho-D-ribosyl)imidazole-4-carboxamide. The protein operates within purine metabolism; IMP biosynthesis via de novo pathway; 5-formamido-1-(5-phospho-D-ribosyl)imidazole-4-carboxamide from 5-amino-1-(5-phospho-D-ribosyl)imidazole-4-carboxamide (10-formyl THF route): step 1/1. It functions in the pathway purine metabolism; IMP biosynthesis via de novo pathway; IMP from 5-formamido-1-(5-phospho-D-ribosyl)imidazole-4-carboxamide: step 1/1. This Prochlorococcus marinus (strain NATL2A) protein is Bifunctional purine biosynthesis protein PurH.